Reading from the N-terminus, the 157-residue chain is Glutathione peroxidase homolog BsaA (157 aa).

Residue cysteine 35 is part of the active site.

The protein belongs to the glutathione peroxidase family.

In Halalkalibacterium halodurans (strain ATCC BAA-125 / DSM 18197 / FERM 7344 / JCM 9153 / C-125) (Bacillus halodurans), this protein is Glutathione peroxidase homolog BsaA (bsaA).